We begin with the raw amino-acid sequence, 424 residues long: Histidine--tRNA ligase (424 aa).

It belongs to the class-II aminoacyl-tRNA synthetase family. In terms of assembly, homodimer.

It localises to the cytoplasm. The catalysed reaction is tRNA(His) + L-histidine + ATP = L-histidyl-tRNA(His) + AMP + diphosphate + H(+). The chain is Histidine--tRNA ligase from Escherichia coli O139:H28 (strain E24377A / ETEC).